Reading from the N-terminus, the 301-residue chain is ATP synthase F(0) complex subunit B1, mitochondrial (301 aa).

The N-terminal 21 residues, 1–21, are a transit peptide targeting the mitochondrion; sequence MSLSRLSSPQTFSRVFIVARG.

The protein belongs to the eukaryotic ATPase B chain family. As to quaternary structure, subunit of the F-type ATPase which has 2 components, CF(1) - the catalytic core - and CF(0) - the membrane proton channel.

The protein localises to the mitochondrion. Its subcellular location is the mitochondrion inner membrane. Its function is as follows. Mitochondrial membrane ATP synthase (F(1)F(0) ATP synthase or Complex V) produces ATP from ADP in the presence of a proton gradient across the membrane which is generated by electron transport complexes of the respiratory chain. F-type ATPases consist of two structural domains, F(1) - containing the extramembraneous catalytic core, and F(0) - containing the membrane proton channel, linked together by a central stalk and a peripheral stalk. During catalysis, ATP synthesis in the catalytic domain of F(1) is coupled via a rotary mechanism of the central stalk subunits to proton translocation. Part of the complex F(0) domain and the peripheric stalk, which acts as a stator to hold the subunits of the catalytic subcomplexes relative to the rotary elements. Plays a role in germline development. The sequence is that of ATP synthase F(0) complex subunit B1, mitochondrial from Caenorhabditis elegans.